The chain runs to 89 residues: Signal recognition particle 19 kDa protein (89 aa).

The protein belongs to the SRP19 family. As to quaternary structure, part of the signal recognition particle protein translocation system, which is composed of SRP and FtsY. Archaeal SRP consists of a 7S RNA molecule of 300 nucleotides and two protein subunits: SRP54 and SRP19.

The protein localises to the cytoplasm. Its function is as follows. Involved in targeting and insertion of nascent membrane proteins into the cytoplasmic membrane. Binds directly to 7S RNA and mediates binding of the 54 kDa subunit of the SRP. The sequence is that of Signal recognition particle 19 kDa protein from Methanococcus maripaludis (strain C5 / ATCC BAA-1333).